Here is a 554-residue protein sequence, read N- to C-terminus: Developmental and secondary metabolism regulator ve-1 (554 aa).

In terms of domain architecture, Velvet spans 31 to 230 (GRKLWYSLRV…AEQGCRVRIR (200 aa)). Positions 45–50 (LRARAC) match the Nuclear localization signal motif. Over residues 166-175 (TKEDKDKDPE) the composition is skewed to basic and acidic residues. Disordered regions lie at residues 166–190 (TKED…SFDF), 232–430 (DVRM…PHRL), and 465–528 (PRAY…VDDK). The span at 276–292 (RSMSGSTERTPYSSISD) shows a compositional bias: polar residues. Composition is skewed to pro residues over residues 363-372 (SYPPPPPPHQ) and 485-494 (LPPPPPPPPQ). A PEST region spans residues 455 to 487 (SPSNMAAPPYPRAYSVSNSGGLTSAGGYNQLPP). A compositionally biased stretch (basic and acidic residues) spans 500 to 528 (RAHDQTFRADPEMRRYQDGARERESVDDK).

It belongs to the velvet family. VeA subfamily. In terms of assembly, component of the heterotrimeric velvet complex composed of lae-1, ve-1 and vel-2; Ve-1 acting as a bridging protein between lae-1 and vel-2.

It is found in the nucleus. Its subcellular location is the cytoplasm. Its function is as follows. Component of the velvet transcription factor complex that controls sexual/asexual developmental ratio in response to light, promoting sexual development in the darkness while stimulating asexual sporulation under illumination. The velvet complex hat acts as a global regulator for secondary metabolite gene expression. The chain is Developmental and secondary metabolism regulator ve-1 from Neurospora crassa (strain ATCC 24698 / 74-OR23-1A / CBS 708.71 / DSM 1257 / FGSC 987).